A 399-amino-acid chain; its full sequence is Dual-specificity RNA methyltransferase RlmN (399 aa).

Catalysis depends on Glu-120, which acts as the Proton acceptor. Residues 126–367 (EEGRGTLCVS…SPVRTPRGRD (242 aa)) enclose the Radical SAM core domain. A disulfide bridge connects residues Cys-133 and Cys-372. Residues Cys-140, Cys-144, and Cys-147 each coordinate [4Fe-4S] cluster. Residues 198-199 (GE), Ser-230, 252-254 (SLH), and Asn-329 each bind S-adenosyl-L-methionine. Residue Cys-372 is the S-methylcysteine intermediate of the active site.

This sequence belongs to the radical SAM superfamily. RlmN family. [4Fe-4S] cluster serves as cofactor.

The protein localises to the cytoplasm. It catalyses the reaction adenosine(2503) in 23S rRNA + 2 reduced [2Fe-2S]-[ferredoxin] + 2 S-adenosyl-L-methionine = 2-methyladenosine(2503) in 23S rRNA + 5'-deoxyadenosine + L-methionine + 2 oxidized [2Fe-2S]-[ferredoxin] + S-adenosyl-L-homocysteine. The enzyme catalyses adenosine(37) in tRNA + 2 reduced [2Fe-2S]-[ferredoxin] + 2 S-adenosyl-L-methionine = 2-methyladenosine(37) in tRNA + 5'-deoxyadenosine + L-methionine + 2 oxidized [2Fe-2S]-[ferredoxin] + S-adenosyl-L-homocysteine. In terms of biological role, specifically methylates position 2 of adenine 2503 in 23S rRNA and position 2 of adenine 37 in tRNAs. m2A2503 modification seems to play a crucial role in the proofreading step occurring at the peptidyl transferase center and thus would serve to optimize ribosomal fidelity. This is Dual-specificity RNA methyltransferase RlmN from Parvibaculum lavamentivorans (strain DS-1 / DSM 13023 / NCIMB 13966).